Reading from the N-terminus, the 321-residue chain is Lipoyl synthase (321 aa).

Residues Cys-68, Cys-73, Cys-79, Cys-94, Cys-98, Cys-101, and Ser-308 each coordinate [4Fe-4S] cluster. The 218-residue stretch at 80–297 folds into the Radical SAM core domain; sequence FNHGTATFMI…KQEALAMGFT (218 aa).

Belongs to the radical SAM superfamily. Lipoyl synthase family. Requires [4Fe-4S] cluster as cofactor.

It is found in the cytoplasm. It catalyses the reaction [[Fe-S] cluster scaffold protein carrying a second [4Fe-4S](2+) cluster] + N(6)-octanoyl-L-lysyl-[protein] + 2 oxidized [2Fe-2S]-[ferredoxin] + 2 S-adenosyl-L-methionine + 4 H(+) = [[Fe-S] cluster scaffold protein] + N(6)-[(R)-dihydrolipoyl]-L-lysyl-[protein] + 4 Fe(3+) + 2 hydrogen sulfide + 2 5'-deoxyadenosine + 2 L-methionine + 2 reduced [2Fe-2S]-[ferredoxin]. The protein operates within protein modification; protein lipoylation via endogenous pathway; protein N(6)-(lipoyl)lysine from octanoyl-[acyl-carrier-protein]: step 2/2. In terms of biological role, catalyzes the radical-mediated insertion of two sulfur atoms into the C-6 and C-8 positions of the octanoyl moiety bound to the lipoyl domains of lipoate-dependent enzymes, thereby converting the octanoylated domains into lipoylated derivatives. This Sodalis glossinidius (strain morsitans) protein is Lipoyl synthase.